The sequence spans 167 residues: SsrA-binding protein (167 aa).

The interval 144–167 (HDKRAADKEKQSKKEVRSAMAKYQ) is disordered. Basic and acidic residues predominate over residues 146–160 (KRAADKEKQSKKEVR).

This sequence belongs to the SmpB family.

The protein localises to the cytoplasm. In terms of biological role, required for rescue of stalled ribosomes mediated by trans-translation. Binds to transfer-messenger RNA (tmRNA), required for stable association of tmRNA with ribosomes. tmRNA and SmpB together mimic tRNA shape, replacing the anticodon stem-loop with SmpB. tmRNA is encoded by the ssrA gene; the 2 termini fold to resemble tRNA(Ala) and it encodes a 'tag peptide', a short internal open reading frame. During trans-translation Ala-aminoacylated tmRNA acts like a tRNA, entering the A-site of stalled ribosomes, displacing the stalled mRNA. The ribosome then switches to translate the ORF on the tmRNA; the nascent peptide is terminated with the 'tag peptide' encoded by the tmRNA and targeted for degradation. The ribosome is freed to recommence translation, which seems to be the essential function of trans-translation. This is SsrA-binding protein from Synechococcus sp. (strain CC9902).